The primary structure comprises 37 residues: Large ribosomal subunit protein bL36c (37 aa).

Belongs to the bacterial ribosomal protein bL36 family.

The protein localises to the plastid. It localises to the chloroplast. The chain is Large ribosomal subunit protein bL36c from Nicotiana tomentosiformis (Tobacco).